The following is a 503-amino-acid chain: Probable cytosol aminopeptidase (503 aa).

Mn(2+)-binding residues include Lys-270 and Asp-275. Residue Lys-282 is part of the active site. 3 residues coordinate Mn(2+): Asp-293, Asp-352, and Glu-354. Residue Arg-356 is part of the active site.

This sequence belongs to the peptidase M17 family. It depends on Mn(2+) as a cofactor.

The protein localises to the cytoplasm. The catalysed reaction is Release of an N-terminal amino acid, Xaa-|-Yaa-, in which Xaa is preferably Leu, but may be other amino acids including Pro although not Arg or Lys, and Yaa may be Pro. Amino acid amides and methyl esters are also readily hydrolyzed, but rates on arylamides are exceedingly low.. It carries out the reaction Release of an N-terminal amino acid, preferentially leucine, but not glutamic or aspartic acids.. Functionally, presumably involved in the processing and regular turnover of intracellular proteins. Catalyzes the removal of unsubstituted N-terminal amino acids from various peptides. The protein is Probable cytosol aminopeptidase of Salmonella arizonae (strain ATCC BAA-731 / CDC346-86 / RSK2980).